Reading from the N-terminus, the 64-residue chain is Large ribosomal subunit protein bL33c (64 aa).

It belongs to the bacterial ribosomal protein bL33 family.

Its subcellular location is the plastid. It localises to the cyanelle. This Cyanophora paradoxa protein is Large ribosomal subunit protein bL33c (rpl33).